The sequence spans 383 residues: MPSGCRCLHLVCLLCILAAPVKPVRADDCSSHCDLAHGCCAPDGSCRCDPGWEGLHCERCVRMPGCQHGTCHQPWQCICHSGWAGKFCDKDEHVCTTQSPCRNGGQCIYDGGGEYHCVCPPGFHGRDCERKEGPCEQAGSPCRNGGQCQDDQGFALNYTCRCLAGFVGAHCEVNVDDCLMRPCANGATCLDGINRFSCLCPEGFAGRFCTINLDDCASRPCQRGARCRDRVHDFDCLCPSGYGGKTCELVLPVPDPATTADIPPGPTLAVVVPATGPIPHSAGAGLLRISVKEVVRRQEAGLGKSSLVAVVVFGAVTATLVLSTVLLTLRAWRRGVCPPGPCCYPAPHYAPARQDQECQVSMLPAGLPLPPDLPPEPGKTTAL.

The first 26 residues, 1-26 (MPSGCRCLHLVCLLCILAAPVKPVRA), serve as a signal peptide directing secretion. 4 consecutive EGF-like domains span residues 27–58 (DDCS…LHCE), 62–89 (RMPG…KFCD), 91–129 (DEHV…RDCE), and 131–172 (KEGP…AHCE). Residues 27 to 306 (DDCSSHCDLA…RQEAGLGKSS (280 aa)) are Extracellular-facing. 17 disulfide bridges follow: C29-C40, C33-C46, C48-C57, C66-C71, C79-C88, C95-C107, C101-C117, C119-C128, C135-C148, C142-C160, C162-C171, C178-C189, C183-C198, C200-C209, C216-C227, C221-C236, and C238-C247. N-linked (GlcNAc...) asparagine glycosylation is present at N157. In terms of domain architecture, EGF-like 5; calcium-binding spans 174–210 (NVDDCLMRPCANGATCLDGINRFSCLCPEGFAGRFCT). The 37-residue stretch at 212–248 (NLDDCASRPCQRGARCRDRVHDFDCLCPSGYGGKTCE) folds into the EGF-like 6; calcium-binding domain. A helical membrane pass occupies residues 307-327 (LVAVVVFGAVTATLVLSTVLL). Residues 328 to 383 (TLRAWRRGVCPPGPCCYPAPHYAPARQDQECQVSMLPAGLPLPPDLPPEPGKTTAL) are Cytoplasmic-facing.

The protein resides in the membrane. Regulates adipogenesis. This Sus scrofa (Pig) protein is Protein delta homolog 2 (DLK2).